The following is a 122-amino-acid chain: uncharacterized protein (122 aa).

This is an uncharacterized protein from Saccharomyces cerevisiae (strain ATCC 204508 / S288c) (Baker's yeast).